A 548-amino-acid chain; its full sequence is Chaperonin GroEL (548 aa).

Residues 30-33 (TLGP), K51, 87-91 (DGTTT), G415, 479-481 (NAA), and D495 each bind ATP.

The protein belongs to the chaperonin (HSP60) family. Forms a cylinder of 14 subunits composed of two heptameric rings stacked back-to-back. Interacts with the co-chaperonin GroES.

Its subcellular location is the cytoplasm. It carries out the reaction ATP + H2O + a folded polypeptide = ADP + phosphate + an unfolded polypeptide.. Its function is as follows. Together with its co-chaperonin GroES, plays an essential role in assisting protein folding. The GroEL-GroES system forms a nano-cage that allows encapsulation of the non-native substrate proteins and provides a physical environment optimized to promote and accelerate protein folding. This is Chaperonin GroEL from Methylibium petroleiphilum (strain ATCC BAA-1232 / LMG 22953 / PM1).